The chain runs to 274 residues: Large ribosomal subunit protein uL2 (274 aa).

Positions 221-256 are disordered; the sequence is RGTAMNPVDHPHGGGEGRNFGKHPVTPWGVPTKGYK.

This sequence belongs to the universal ribosomal protein uL2 family. As to quaternary structure, part of the 50S ribosomal subunit. Forms a bridge to the 30S subunit in the 70S ribosome.

Functionally, one of the primary rRNA binding proteins. Required for association of the 30S and 50S subunits to form the 70S ribosome, for tRNA binding and peptide bond formation. It has been suggested to have peptidyltransferase activity; this is somewhat controversial. Makes several contacts with the 16S rRNA in the 70S ribosome. This is Large ribosomal subunit protein uL2 from Hahella chejuensis (strain KCTC 2396).